The sequence spans 564 residues: Bifunctional protein CrtB/UppS (564 aa).

D329 is an active-site residue. D329 contacts Mg(2+). Residues 330 to 333 (GNRR), W334, H346, and 374 to 376 (STE) contribute to the substrate site. N377 serves as the catalytic Proton acceptor. Substrate is bound by residues W378, R380, R497, and 502–504 (RIS). E515 provides a ligand contact to Mg(2+).

In the N-terminal section; belongs to the phytoene/squalene synthase family. The protein in the C-terminal section; belongs to the UPP synthase family. In terms of assembly, homodimer. Mg(2+) is required as a cofactor.

It catalyses the reaction 2 (2E,6E,10E)-geranylgeranyl diphosphate = 15-cis-phytoene + 2 diphosphate. It functions in the pathway carotenoid biosynthesis; phytoene biosynthesis; all-trans-phytoene from geranylgeranyl diphosphate: step 1/1. Its function is as follows. Catalyzes the reaction from prephytoene diphosphate to phytoene. In terms of biological role, catalyzes the condensation of isopentenyl diphosphate (IPP) with allylic pyrophosphates generating different type of terpenoids. The sequence is that of Bifunctional protein CrtB/UppS (crtB/uppS3) from Streptomyces coelicolor (strain ATCC BAA-471 / A3(2) / M145).